A 294-amino-acid chain; its full sequence is MEKYLEKTKVLIEALPYIKKFYGKTIVIKYGGHAMVSDQLKEAVINDLVLMKFVGINPVVVHGGGPEISRMLNKLNIKSNFINGLRVTDEATLEVVEMVLVGKVNKEIVGLIEKAGGKAVGLSGKDAGLIKAHKKLAKNPEPTGEEYLDLGYVGEISEVNPEILLTLIDKGYIPVVAPVGSNGSGEFYNINADEVAAEVAVALKADKLIVLTDTPGILLNEKDENSLLSKATIAEVKELINRGVIRGGMIPKAESAISAIKRGVGSVHIIDGRIAHSLLLEIFTDAGVGTMLTP.

Residues 64–65 (GG), Arg-86, and Asn-189 each bind substrate.

The protein belongs to the acetylglutamate kinase family. ArgB subfamily.

The protein resides in the cytoplasm. The enzyme catalyses N-acetyl-L-glutamate + ATP = N-acetyl-L-glutamyl 5-phosphate + ADP. Its pathway is amino-acid biosynthesis; L-arginine biosynthesis; N(2)-acetyl-L-ornithine from L-glutamate: step 2/4. Its function is as follows. Catalyzes the ATP-dependent phosphorylation of N-acetyl-L-glutamate. The chain is Acetylglutamate kinase from Carboxydothermus hydrogenoformans (strain ATCC BAA-161 / DSM 6008 / Z-2901).